Here is a 432-residue protein sequence, read N- to C-terminus: MGKSVVILGAQWGDEGKGKIVDLLTDRVKYVVRYQGGHNAGHTLIINGEKTVLRLIPSGMLHPNVTCLIGNGVVVSPEALMKEMGELESRGIKVRERLLISEACPLILPYHVAMDHAREAALGKKAIGTTGRGIGPAYEDKVARRGLRVGDLFNKEAFAEKLKNILEYYNFQLVNYYKVEPVDYQKTLDDVMAIADVITGMVADITTILDTARKNGEHILFEGAQGTMLDIDHGTYPYVTSSNTTAGGVATGSGFGPRNLDYVLGIIKAYCTRVGGGPFTTELFDDVGAEIARKGNEFGAVTGRPRRCGWFDAVAIRRAIQLNSISGFCMTKLDVLDGFDEVKICVAYKMPNGEIVEYAPLAAKDWEGVEPIYETLPGWKENTFRITDVNKLPQNCINYIKRIEEVTGVPIDILSTGPDRVETMILRDPFAA.

GTP contacts are provided by residues 13-19 (GDEGKGK) and 41-43 (GHT). The active-site Proton acceptor is aspartate 14. Mg(2+) is bound by residues aspartate 14 and glycine 41. Residues 14–17 (DEGK), 39–42 (NAGH), threonine 130, arginine 144, glutamine 225, threonine 240, and arginine 304 contribute to the IMP site. Histidine 42 serves as the catalytic Proton donor. 300–306 (AVTGRPR) contributes to the substrate binding site. Residues arginine 306, 332–334 (KLD), and 415–417 (STG) contribute to the GTP site.

It belongs to the adenylosuccinate synthetase family. Homodimer. Mg(2+) is required as a cofactor.

Its subcellular location is the cytoplasm. The enzyme catalyses IMP + L-aspartate + GTP = N(6)-(1,2-dicarboxyethyl)-AMP + GDP + phosphate + 2 H(+). Its pathway is purine metabolism; AMP biosynthesis via de novo pathway; AMP from IMP: step 1/2. Plays an important role in the de novo pathway of purine nucleotide biosynthesis. Catalyzes the first committed step in the biosynthesis of AMP from IMP. The sequence is that of Adenylosuccinate synthetase from Haemophilus influenzae (strain 86-028NP).